Consider the following 205-residue polypeptide: Methylthioribulose-1-phosphate dehydratase (205 aa).

Residues His-94 and His-96 each contribute to the Zn(2+) site.

Belongs to the aldolase class II family. MtnB subfamily. The cofactor is Zn(2+).

The enzyme catalyses 5-(methylsulfanyl)-D-ribulose 1-phosphate = 5-methylsulfanyl-2,3-dioxopentyl phosphate + H2O. Its pathway is amino-acid biosynthesis; L-methionine biosynthesis via salvage pathway; L-methionine from S-methyl-5-thio-alpha-D-ribose 1-phosphate: step 2/6. Catalyzes the dehydration of methylthioribulose-1-phosphate (MTRu-1-P) into 2,3-diketo-5-methylthiopentyl-1-phosphate (DK-MTP-1-P). The chain is Methylthioribulose-1-phosphate dehydratase from Pectobacterium carotovorum subsp. carotovorum (strain PC1).